Reading from the N-terminus, the 413-residue chain is Serine hydroxymethyltransferase (413 aa).

(6S)-5,6,7,8-tetrahydrofolate is bound by residues Leu-118 and 122–124 (GHL). Lys-228 carries the N6-(pyridoxal phosphate)lysine modification.

Belongs to the SHMT family. In terms of assembly, homodimer. It depends on pyridoxal 5'-phosphate as a cofactor.

It is found in the cytoplasm. It catalyses the reaction (6R)-5,10-methylene-5,6,7,8-tetrahydrofolate + glycine + H2O = (6S)-5,6,7,8-tetrahydrofolate + L-serine. Its pathway is one-carbon metabolism; tetrahydrofolate interconversion. It functions in the pathway amino-acid biosynthesis; glycine biosynthesis; glycine from L-serine: step 1/1. Its function is as follows. Catalyzes the reversible interconversion of serine and glycine with tetrahydrofolate (THF) serving as the one-carbon carrier. This reaction serves as the major source of one-carbon groups required for the biosynthesis of purines, thymidylate, methionine, and other important biomolecules. Also exhibits THF-independent aldolase activity toward beta-hydroxyamino acids, producing glycine and aldehydes, via a retro-aldol mechanism. In Phytoplasma australiense, this protein is Serine hydroxymethyltransferase.